The sequence spans 115 residues: Integration host factor subunit alpha (115 aa).

It belongs to the bacterial histone-like protein family. Heterodimer of an alpha and a beta chain.

In terms of biological role, this protein is one of the two subunits of integration host factor, a specific DNA-binding protein that functions in genetic recombination as well as in transcriptional and translational control. This Burkholderia pseudomallei (strain K96243) protein is Integration host factor subunit alpha.